The primary structure comprises 82 residues: RNA-binding protein Hfq (82 aa).

Residues 9–68 enclose the Sm domain; it reads DPYLNTLRKERVPVSIYLVNGIKLQGQIESFDQFVILLKNTVSQMVYKTAISTVVPSRPV.

It belongs to the Hfq family. In terms of assembly, homohexamer.

Its function is as follows. RNA chaperone that binds small regulatory RNA (sRNAs) and mRNAs to facilitate mRNA translational regulation in response to envelope stress, environmental stress and changes in metabolite concentrations. Also binds with high specificity to tRNAs. The sequence is that of RNA-binding protein Hfq from Pseudomonas aeruginosa.